We begin with the raw amino-acid sequence, 807 residues long: MRVSISWLKQLVQVNESVDDLSERLSMAGFEVDDVDDLSARAQGVVVGNVLEREKHPNADKLSVCKVDVGAQAPIQIVCGASNVRSGIHVPVAMVGATLPAVGLTIKAGELRGVASNGMICSLTELGLTEQSDGIAILDELDESLPPNGSPVAPLLGLDDTVLELAITANRPDGLSMVGIAREVAALTGGSLSLPELDLDPSTSPLTTELDGCFYTITRIEGVDGSKPSPTWLQQRLERGGVNSVNAVVDVTNLVMLEQGQPLHAFDADALEQLTGQPVDAKSFAVRSARDGEIFVGLDDQKRTLDSRVQVVTCHDRPVAVAGVMGSLESGVTASTRNIWLESALFAPPRVRHSARALGLRTDASSRFEKGLPVEMTLPCSARASALLSQEFSCSESGRWVGGSGPAEAGPVLLRRSALHQLLGPLDAADGPEDLDDTSIENCLTALGCQLSAHEQGWEVMAPPSRRQDLQREVDLIEEVARLVGFDRFGAHLPDPLEPGALTPRQQAERRLRQLFCATGLQEVTTLSLVPASEQEQRIAISNPLLADTSHLRTNLWEEHLQICVRNLKASQRGCSVFEIGNTYSGSPEAVSQKAVLAGVICGDRRLSTWATSGKPQAPDYFQARGVLTRVMEALQLELSDRRLTDDARLHPGRAATLVLEGRPLGCFGQLHPAMAEELDLPEATYLFELDLARLLDAATRSNRWTPSFKPYPTVPFSERDLAVIVDRSSAATDLIQAIRKAGKPLLEQVELVDRFEGEQLGDNKVSQAFRLRYRGKNETLTDDKIQPVHDKVRAALSKQFQAELRS.

Residues 39 to 153 (SARAQGVVVG…SLPPNGSPVA (115 aa)) form the tRNA-binding domain. The region spanning 407-491 (AEAGPVLLRR…RLVGFDRFGA (85 aa)) is the B5 domain. Mg(2+) is bound by residues Asp-469, Asp-475, Glu-478, and Glu-479. Residues 713-806 (PTVPFSERDL…LSKQFQAELR (94 aa)) enclose the FDX-ACB domain.

The protein belongs to the phenylalanyl-tRNA synthetase beta subunit family. Type 1 subfamily. As to quaternary structure, tetramer of two alpha and two beta subunits. Mg(2+) serves as cofactor.

It is found in the cytoplasm. The enzyme catalyses tRNA(Phe) + L-phenylalanine + ATP = L-phenylalanyl-tRNA(Phe) + AMP + diphosphate + H(+). This chain is Phenylalanine--tRNA ligase beta subunit, found in Synechococcus sp. (strain CC9605).